A 462-amino-acid polypeptide reads, in one-letter code: Glycine--tRNA ligase (462 aa).

Residues arginine 98 and glutamate 174 each contribute to the substrate site. Residues 206–208 (RNE), 216–221 (FRTREF), 290–291 (EL), and 334–337 (GADR) contribute to the ATP site. 221 to 225 (FEQME) lines the substrate pocket. 330–334 (EPSLG) provides a ligand contact to substrate.

The protein belongs to the class-II aminoacyl-tRNA synthetase family. In terms of assembly, homodimer.

The protein localises to the cytoplasm. It carries out the reaction tRNA(Gly) + glycine + ATP = glycyl-tRNA(Gly) + AMP + diphosphate. Catalyzes the attachment of glycine to tRNA(Gly). The chain is Glycine--tRNA ligase from Lachnoclostridium phytofermentans (strain ATCC 700394 / DSM 18823 / ISDg) (Clostridium phytofermentans).